We begin with the raw amino-acid sequence, 224 residues long: ETGESKETGESKETGESKETGESKETGESKETGESKETGESKETGESKETGESKETGESKETGESKETGESKETGESKETGESKETGESKETGESKETGESKETRIYEETKYNKITSEFRETENVKITEESKDREGNKVSGPYENSENSNVTSESEETKKLAEKEENEGEKLGENVNDGASENSEDPKKLTEQEENGTKESSEETKDDKPEENEKKADNKKKKK.

17 tandem repeats follow at residues 1–6 (ETGESK), 7–12 (ETGESK), 13–18 (ETGESK), 19–24 (ETGESK), 25–30 (ETGESK), 31–36 (ETGESK), 37–42 (ETGESK), 43–48 (ETGESK), 49–54 (ETGESK), 55–60 (ETGESK), 61–66 (ETGESK), 67–72 (ETGESK), 73–78 (ETGESK), 79–84 (ETGESK), 85–90 (ETGESK), 91–96 (ETGESK), and 97–102 (ETGESK). The 17 X 6 AA tandem repeats of E-T-G-E-S-K stretch occupies residues 1-102 (ETGESKETGE…GESKETGESK (102 aa)). Basic and acidic residues predominate over residues 1–137 (ETGESKETGE…TEESKDREGN (137 aa)). A disordered region spans residues 1–224 (ETGESKETGE…KKADNKKKKK (224 aa)). Residues 144–153 (ENSENSNVTS) show a composition bias toward low complexity. Basic and acidic residues-rich tracts occupy residues 156–173 (EETK…EKLG) and 185–217 (EDPK…EKKA).

The sequence is that of Processed variable antigen from Plasmodium falciparum.